The primary structure comprises 331 residues: Olfactory receptor 6S1 (331 aa).

At 1–29 (MSPDGNHSSDPTEFVLAGLPNLNSARVEL) the chain is on the extracellular side. Asn-6 carries N-linked (GlcNAc...) asparagine glycosylation. Residues 30–50 (FSVFLLVYLLNLTGNVLIVGV) form a helical membrane-spanning segment. Residues 51–59 (VRADTRLQT) are Cytoplasmic-facing. A helical membrane pass occupies residues 60-80 (PMYFFLGNLSCLEILLTSVII). Over 81–99 (PKMLSNFLSRQHTISFAAC) the chain is Extracellular. Cys-99 and Cys-182 form a disulfide bridge. Residues 100–120 (ITQFYFYFFLGASEFLLLAVM) traverse the membrane as a helical segment. The Cytoplasmic segment spans residues 121 to 147 (SADRYLAICHPLRYPLLMSGAVCFRVA). A helical membrane pass occupies residues 148-168 (LACWVGGLVPVLGPTVAVALL). The Extracellular segment spans residues 169–207 (PFCKQGAVVQHFFCDSGPLLRLACTNTKKLEETDFVLAS). The chain crosses the membrane as a helical span at residues 208-228 (LVIVSSLLITAVSYGLIVLAV). At 229–242 (LSIPSASGRQKAFS) the chain is on the cytoplasmic side. A helical membrane pass occupies residues 243–263 (TCTSHLIVVTLFYGSAIFLYV). Residues 264-274 (RPSQSGSVDTN) are Extracellular-facing. The chain crosses the membrane as a helical span at residues 275 to 295 (WAVTVITTFVTPLLNPFIYAL). At 296–331 (RNEQVKEALKDMFRKVVAGVLGNLLLDKCLSEKAVK) the chain is on the cytoplasmic side.

Belongs to the G-protein coupled receptor 1 family.

It localises to the cell membrane. In terms of biological role, odorant receptor. This Homo sapiens (Human) protein is Olfactory receptor 6S1 (OR6S1).